A 467-amino-acid polypeptide reads, in one-letter code: uncharacterized protein (467 aa).

Lysine 290 bears the N6-(pyridoxal phosphate)lysine mark.

It belongs to the class-III pyridoxal-phosphate-dependent aminotransferase family. The cofactor is pyridoxal 5'-phosphate.

This is an uncharacterized protein from Sinorhizobium fredii (strain NBRC 101917 / NGR234).